Reading from the N-terminus, the 403-residue chain is GPI-N-acetylgalactosamine transferase PGAP4 (403 aa).

The Cytoplasmic portion of the chain corresponds to 1–22 (MSTSTSPAAMLLRRLRRLSWGS). A helical membrane pass occupies residues 23–43 (TAVQLFILTVVTFGLLAPLAC). The Lumenal segment spans residues 44-259 (HRLLHSYFYL…RLQHYINPEP (216 aa)). N87 carries N-linked (GalNAc...) asparagine glycosylation. V109 lines the UDP-N-acetyl-alpha-D-galactosamine pocket. 2 cysteine pairs are disulfide-bonded: C132–C136 and C144–C194. The short motif at 211–213 (EDD) is the DXD motif element. A helical transmembrane segment spans residues 260 to 280 (MRILEWVGVGMLLGPLLTWIY). At 281–287 (MRFASRP) the chain is on the cytoplasmic side. A helical transmembrane segment spans residues 288-308 (GFSWPVMLFFSLYSMGLVELV). Residues 309-403 (GRHYFLELRR…LRYNFHPSLL (95 aa)) are Lumenal-facing. The cysteines at positions 332 and 333 are disulfide-linked. Residues T334, P335, and K362 each coordinate UDP-N-acetyl-alpha-D-galactosamine.

This sequence belongs to the PGAP4 family. In terms of processing, glycosylated.

Its subcellular location is the golgi apparatus membrane. Functionally, golgi-resident glycosylphosphatidylinositol (GPI)-N-acetylgalactosamine transferase that catalyzes the N-acetyl-beta-D-galactosamine transfer from an UDP-N-acetyl-alpha-D-galactosamine to the 4-OH-position of the first mannose of the glycosylphosphatidylinositol (GPI) of a GPI-anchored protein (GPI-AP). This modification occurs after the fatty acid remodeling step of the GPI-anchor maturation. This Homo sapiens (Human) protein is GPI-N-acetylgalactosamine transferase PGAP4.